Consider the following 525-residue polypeptide: Glutamate--cysteine ligase (525 aa).

It belongs to the glutamate--cysteine ligase type 1 family. Type 1 subfamily.

The enzyme catalyses L-cysteine + L-glutamate + ATP = gamma-L-glutamyl-L-cysteine + ADP + phosphate + H(+). Its pathway is sulfur metabolism; glutathione biosynthesis; glutathione from L-cysteine and L-glutamate: step 1/2. The chain is Glutamate--cysteine ligase from Pseudoalteromonas translucida (strain TAC 125).